Here is a 134-residue protein sequence, read N- to C-terminus: Large ribosomal subunit protein uL14 (134 aa).

The protein belongs to the universal ribosomal protein uL14 family. In terms of assembly, part of the 50S ribosomal subunit. Forms a cluster with proteins L3 and L19. In the 70S ribosome, L14 and L19 interact and together make contacts with the 16S rRNA in bridges B5 and B8.

Binds to 23S rRNA. Forms part of two intersubunit bridges in the 70S ribosome. The sequence is that of Large ribosomal subunit protein uL14 from Deinococcus geothermalis (strain DSM 11300 / CIP 105573 / AG-3a).